We begin with the raw amino-acid sequence, 393 residues long: Cysteine protease ATG4B (393 aa).

At methionine 1 the chain carries N-acetylmethionine. Serine 34 carries the post-translational modification Phosphoserine; by PKB/AKT1 and PKB/AKT2. Cysteine 74 acts as the Nucleophile in catalysis. The residue at position 189 (cysteine 189) is an S-nitrosocysteine. Catalysis depends on residues aspartate 278 and histidine 280. S-nitrosocysteine is present on residues cysteine 292 and cysteine 301. A disulfide bridge links cysteine 292 with cysteine 361. The residue at position 316 (serine 316) is a Phosphoserine; by ULK1. A Phosphoserine; by STK26 modification is found at serine 383. The LIR signature appears at 388–391 (FEIL). Phosphoserine is present on serine 392.

The protein belongs to the peptidase C54 family. As to quaternary structure, interacts with PFKP; promoting phosphorylation of ATG4B at Ser-34. Interacts with GBP7. In terms of processing, phosphorylation at Ser-383 and Ser-392 promotes autophagy by increasing protein delipidation activity without affecting proteolytic activation of ATG8 proteins. Phosphorylation at Ser-316 by ULK1 inhibits autophagy by decreasing both proteolytic activation and delipidation activities. Phosphorylation at Ser-316 is dephosphorylated by protein phosphatase 2A (PP2A). Phosphorylation at Ser-34 by AKT2 promotes its hydrolase activity, leading to increased proteolytic activation and delipidation of ATG8 family proteins. Phosphorylation at Ser-34 by AKT1 promotes mitochondrial localization and inhibition of the F1F0-ATP synthase activity, leading to elevation of mitochondrial reactive oxygen species (ROS). Ubiquitinated by RNF5, leading to its degradation by the proteasome. Post-translationally, S-nitrosylation at Cys-189 and Cys-292 in response to high glucose decreases both proteolytic activation and delipidation activities. In terms of processing, O-glycosylated by OGT, leading to increase protease activity, thereby promoting the proteolytic activation of ATG8 family proteins. Forms reversible intrachain disulfide bonds in response to oxidative stress. Forms interchain disulfide bonds, leading to formation of homooligomers in response to oxidation.

The protein resides in the cytoplasm. Its subcellular location is the cytosol. The protein localises to the cytoplasmic vesicle. It localises to the autophagosome. It is found in the endoplasmic reticulum. The protein resides in the mitochondrion. It carries out the reaction [protein]-C-terminal L-amino acid-glycyl-phosphatidylethanolamide + H2O = [protein]-C-terminal L-amino acid-glycine + a 1,2-diacyl-sn-glycero-3-phosphoethanolamine. The catalysed reaction is [protein]-C-terminal L-amino acid-glycyl-phosphatidylserine + H2O = [protein]-C-terminal L-amino acid-glycine + a 1,2-diacyl-sn-glycero-3-phospho-L-serine. Its activity is regulated as follows. Inhibited by N-ethylmaleimide. Redox-regulated during autophagy since reducing conditions activate ATG4A whereas an oxidizing environment such as the presence of H(2)O(2) inhibits its activity. The cysteine protease activity compounds is inhibited by styrylquinoline compounds 4-28 and LV-320. Functionally, cysteine protease that plays a key role in autophagy by mediating both proteolytic activation and delipidation of ATG8 family proteins. Required for canonical autophagy (macroautophagy), non-canonical autophagy as well as for mitophagy. The protease activity is required for proteolytic activation of ATG8 family proteins: cleaves the C-terminal amino acid of ATG8 proteins MAP1LC3A, MAP1LC3B, MAP1LC3C, GABARAPL1, GABARAPL2 and GABARAP, to reveal a C-terminal glycine. Exposure of the glycine at the C-terminus is essential for ATG8 proteins conjugation to phosphatidylethanolamine (PE) and insertion to membranes, which is necessary for autophagy. Protease activity is also required to counteract formation of high-molecular weight conjugates of ATG8 proteins (ATG8ylation): acts as a deubiquitinating-like enzyme that removes ATG8 conjugated to other proteins, such as ATG3. In addition to the protease activity, also mediates delipidation of ATG8 family proteins. Catalyzes delipidation of PE-conjugated forms of ATG8 proteins during macroautophagy. Also involved in non-canonical autophagy, a parallel pathway involving conjugation of ATG8 proteins to single membranes at endolysosomal compartments, by catalyzing delipidation of ATG8 proteins conjugated to phosphatidylserine (PS). Compared to other members of the family (ATG4A, ATG4C or ATG4C), constitutes the major protein for proteolytic activation of ATG8 proteins, while it displays weaker delipidation activity than other ATG4 paralogs. Involved in phagophore growth during mitophagy independently of its protease activity and of ATG8 proteins: acts by regulating ATG9A trafficking to mitochondria and promoting phagophore-endoplasmic reticulum contacts during the lipid transfer phase of mitophagy. The chain is Cysteine protease ATG4B from Homo sapiens (Human).